We begin with the raw amino-acid sequence, 392 residues long: 1-deoxy-D-xylulose 5-phosphate reductoisomerase (392 aa).

Thr-10, Gly-11, Ser-12, Ile-13, Asn-38, and Asn-124 together coordinate NADPH. Lys-125 provides a ligand contact to 1-deoxy-D-xylulose 5-phosphate. An NADPH-binding site is contributed by Glu-126. Asp-150 provides a ligand contact to Mn(2+). The 1-deoxy-D-xylulose 5-phosphate site is built by Ser-151, Glu-152, Ser-176, and His-199. Residue Glu-152 coordinates Mn(2+). An NADPH-binding site is contributed by Gly-205. Ser-212, Asn-217, Lys-218, and Glu-221 together coordinate 1-deoxy-D-xylulose 5-phosphate. Glu-221 contributes to the Mn(2+) binding site.

It belongs to the DXR family. Mg(2+) serves as cofactor. Mn(2+) is required as a cofactor.

The catalysed reaction is 2-C-methyl-D-erythritol 4-phosphate + NADP(+) = 1-deoxy-D-xylulose 5-phosphate + NADPH + H(+). It functions in the pathway isoprenoid biosynthesis; isopentenyl diphosphate biosynthesis via DXP pathway; isopentenyl diphosphate from 1-deoxy-D-xylulose 5-phosphate: step 1/6. Catalyzes the NADPH-dependent rearrangement and reduction of 1-deoxy-D-xylulose-5-phosphate (DXP) to 2-C-methyl-D-erythritol 4-phosphate (MEP). In Gloeobacter violaceus (strain ATCC 29082 / PCC 7421), this protein is 1-deoxy-D-xylulose 5-phosphate reductoisomerase.